The chain runs to 471 residues: N(6)-adenine-specific methyltransferase METTL4 (471 aa).

Belongs to the MT-A70-like family.

Its subcellular location is the nucleus. The catalysed reaction is a 2'-O-methyladenosine in U2 snRNA + S-adenosyl-L-methionine = an N(6)-methyl-2'-O-methyladenosine in U2 snRNA + S-adenosyl-L-homocysteine + H(+). The enzyme catalyses a 2'-deoxyadenosine in DNA + S-adenosyl-L-methionine = an N(6)-methyl-2'-deoxyadenosine in DNA + S-adenosyl-L-homocysteine + H(+). Its function is as follows. N(6)-adenine-specific methyltransferase that can methylate both RNAs and DNA. Acts as a N(6)-adenine-specific RNA methyltransferase by catalyzing formation of N6,2'-O-dimethyladenosine (m6A(m)) on internal positions of U2 small nuclear RNA (snRNA): methylates the 6th position of adenine residues with a pre-deposited 2'-O-methylation. Internal m6A(m) methylation of snRNAs regulates RNA splicing. Also able to act as a N(6)-adenine-specific DNA methyltransferase by mediating methylation of DNA on the 6th position of adenine (N(6)-methyladenosine). The existence of N(6)-methyladenosine (m6A) on DNA is however unclear in mammals, and additional evidences are required to confirm the role of the N(6)-adenine-specific DNA methyltransferase activity of METTL4 in vivo. Acts as a regulator of mitochondrial transcript levels and mitochondrial DNA (mtDNA) copy number by mediating mtDNA N(6)-methylation: m6A on mtDNA reduces transcription by repressing TFAM DNA-binding and bending. N(6)-methyladenosine deposition by METTL4 regulates Polycomb silencing by triggering ubiquitination and degradation of sensor proteins ASXL1 and MPND, leading to inactivation of the PR-DUB complex and subsequent preservation of Polycomb silencing. The protein is N(6)-adenine-specific methyltransferase METTL4 of Mus musculus (Mouse).